A 308-amino-acid chain; its full sequence is Ribosomal RNA small subunit methyltransferase H (308 aa).

S-adenosyl-L-methionine-binding positions include 31–33 (GGH), aspartate 51, phenylalanine 75, aspartate 97, and glutamine 104.

It belongs to the methyltransferase superfamily. RsmH family.

The protein localises to the cytoplasm. The catalysed reaction is cytidine(1402) in 16S rRNA + S-adenosyl-L-methionine = N(4)-methylcytidine(1402) in 16S rRNA + S-adenosyl-L-homocysteine + H(+). Specifically methylates the N4 position of cytidine in position 1402 (C1402) of 16S rRNA. The sequence is that of Ribosomal RNA small subunit methyltransferase H from Tolumonas auensis (strain DSM 9187 / NBRC 110442 / TA 4).